Reading from the N-terminus, the 620-residue chain is Eukaryotic translation initiation factor 2-alpha kinase 1 (620 aa).

Positions 1–38 (MLGGGSVDGERDTDDDAAGAVAAPPAIDFPAEVSDPKY) are disordered. Residues 18 to 28 (AGAVAAPPAID) are compositionally biased toward low complexity. The SIFI-degron motif lies at 85–104 (LHSKQVFKLLCQTFIKMGLL). The Protein kinase domain occupies 167-581 (FEELAILGKG…ALQLLQSELF (415 aa)). ATP is bound by residues 173-181 (LGKGGYGRV) and Lys-196. Thr-283 carries the phosphothreonine modification. The stretch at 408-413 (ACPYVM) is one HRM 1 repeat. The active-site Proton acceptor is the Asp-440. Thr-484 and Thr-486 each carry phosphothreonine; by autocatalysis. Thr-491 is subject to Phosphothreonine. The stretch at 550–555 (RCPVQA) is one HRM 2 repeat.

It belongs to the protein kinase superfamily. Ser/Thr protein kinase family. GCN2 subfamily. Synthesized in an inactive form that binds to the N-terminal domain of CDC37. Has to be associated with a multiprotein complex containing Hsp90, CDC37 and PPP5C for maturation and activation by autophosphorylation. The phosphatase PPP5C modulates this activation. Homodimer; homodimerizes in presence of heme, forming a disulfide-linked inactive homodimer. Interacts with DELE1; binds both to full-length DELE1 and processed form of DELE1 (S-DELE1) in response to stress, leading to activate its protein kinase activity and trigger the integrated stress response (ISR). In terms of processing, activated by autophosphorylation; phosphorylated predominantly on serine and threonine residues, but also on tyrosine residues. Autophosphorylation at Thr-486 is required for kinase activation. The active autophosphorylated form apparently is largely refractory to cellular heme fluctuations. Post-translationally, ubiquitinated and degraded by the SIFI complex once the mitochondrial stress has been resolved, thereby providing stress response silencing. Within the SIFI complex, UBR4 initiates ubiquitin chain that are further elongated or branched by KCMF1.

The protein resides in the cytoplasm. It catalyses the reaction L-seryl-[protein] + ATP = O-phospho-L-seryl-[protein] + ADP + H(+). The enzyme catalyses L-threonyl-[protein] + ATP = O-phospho-L-threonyl-[protein] + ADP + H(+). In normal conditions, the protein kinase activity is inhibited; inhibition is relieved by various stress conditions. Inhibited by heme: in presence of heme, forms a disulfide-linked inactive homodimer. Heme depletion relieves inhibition and stimulates kinase activity by autophosphorylation. Inhibited by the heme metabolites biliverdin and bilirubin. Induced by oxidative stress generated by arsenite treatment. Binding of nitric oxide (NO) to the heme iron in the N-terminal heme-binding domain activates the kinase activity, while binding of carbon monoxide (CO) suppresses kinase activity. Protein kinase activity is also activated upon binding to DELE1 in response to various stress, triggering the integrated stress response (ISR): activated by full-length DELE1 in response to iron deficiency, while it is activated by the processed form of DELE1 (S-DELE1) in response to mitochondrial stress. Functionally, metabolic-stress sensing protein kinase that phosphorylates the alpha subunit of eukaryotic translation initiation factor 2 (EIF2S1/eIF-2-alpha) in response to various stress conditions. Key activator of the integrated stress response (ISR) required for adaptation to various stress, such as heme deficiency, oxidative stress, osmotic shock, mitochondrial dysfunction and heat shock. EIF2S1/eIF-2-alpha phosphorylation in response to stress converts EIF2S1/eIF-2-alpha in a global protein synthesis inhibitor, leading to a global attenuation of cap-dependent translation, while concomitantly initiating the preferential translation of ISR-specific mRNAs, such as the transcriptional activator ATF4, and hence allowing ATF4-mediated reprogramming. Acts as a key sensor of heme-deficiency: in normal conditions, binds hemin via a cysteine thiolate and histidine nitrogenous coordination, leading to inhibit the protein kinase activity. This binding occurs with moderate affinity, allowing it to sense the heme concentration within the cell: heme depletion relieves inhibition and stimulates kinase activity, activating the ISR. Thanks to this unique heme-sensing capacity, plays a crucial role to shut off protein synthesis during acute heme-deficient conditions. In red blood cells (RBCs), controls hemoglobin synthesis ensuring a coordinated regulation of the synthesis of its heme and globin moieties. It thereby plays an essential protective role for RBC survival in anemias of iron deficiency. Iron deficiency also triggers activation by full-length DELE1. Also activates the ISR in response to mitochondrial dysfunction: HRI/EIF2AK1 protein kinase activity is activated upon binding to the processed form of DELE1 (S-DELE1), thereby promoting the ATF4-mediated reprogramming. Also acts as an activator of mitophagy in response to mitochondrial damage: catalyzes phosphorylation of eIF-2-alpha (EIF2S1) following activation by S-DELE1, thereby promoting mitochondrial localization of EIF2S1, triggering PRKN-independent mitophagy. The chain is Eukaryotic translation initiation factor 2-alpha kinase 1 from Rattus norvegicus (Rat).